We begin with the raw amino-acid sequence, 494 residues long: MSSQPGDPATLPAQSSLSFTQGFLLGQLSVVLVLAAFIKFFIFGEAPPPPSRGLSHRSATHRRSNSIYSNSPQEAGSRSLREKPSTSNVLRPVPSSSTNTRSILRKTYYSAIPTNPAKHGRLRIHHSSHQPESLDWFNVLIAQTIAQYRQTAYSLKDSPTSSILNSLTAALNNPEKKPAFIDKITVTDISLGEEFPIFSNCRIIAVDDPNSDGGRLQALMDVDLSDDNLSIAIETQLLLNYPKPCSAILPVALSISVVRFSGTLCISLVPASTPPLDTPSHSPSPPTADTATSGRSKPGDKAGGNQPRSNGSTEDPAGGNPPKTSPKSNVAFSFLPDYRLDLSVRSLIGSRSRLQDVPKVAQLVEARVQAWFEERVVEPRVQVVGLPDLWPRMGRTGVRTGDDAETASNGPRSTVSADIGGSARHEELAREPEALRFRGLLGARPPFDVASRTSSFNVETGDLRSRSMTRQESSGDLSDQLHIPGSLPEAVTPG.

Residues 1-22 lie on the Lumenal side of the membrane; it reads MSSQPGDPATLPAQSSLSFTQG. A helical transmembrane segment spans residues 23–43; that stretch reads FLLGQLSVVLVLAAFIKFFIF. The Cytoplasmic portion of the chain corresponds to 44 to 494; sequence GEAPPPPSRG…GSLPEAVTPG (451 aa). Disordered stretches follow at residues 50–98, 274–330, 398–426, and 449–494; these read PSRG…SSST, PPLD…KSNV, VRTGDDAETASNGPRSTVSADIGGSARHE, and VASR…VTPG. Residues 54-64 show a composition bias toward basic residues; sequence LSHRSATHRRS. Composition is skewed to polar residues over residues 65–76 and 85–98; these read NSIYSNSPQEAG and STSNVLRPVPSSST. Residues 130–387 form the SMP-LTD domain; the sequence is QPESLDWFNV…EPRVQVVGLP (258 aa). Residues 274-286 are compositionally biased toward pro residues; sequence PPLDTPSHSPSPP. Polar residues-rich tracts occupy residues 406-416 and 466-477; these read TASNGPRSTVS and RSMTRQESSGDL.

The protein belongs to the MMM1 family. In terms of assembly, homodimer. Component of the ER-mitochondria encounter structure (ERMES) or MDM complex, composed of mmm1, mdm10, mdm12 and mdm34. A mmm1 homodimer associates with one molecule of mdm12 on each side in a pairwise head-to-tail manner, and the SMP-LTD domains of mmm1 and mdm12 generate a continuous hydrophobic tunnel for phospholipid trafficking.

The protein localises to the endoplasmic reticulum membrane. Its function is as follows. Component of the ERMES/MDM complex, which serves as a molecular tether to connect the endoplasmic reticulum (ER) and mitochondria. Components of this complex are involved in the control of mitochondrial shape and protein biogenesis, and function in nonvesicular lipid trafficking between the ER and mitochondria. The mdm12-mmm1 subcomplex functions in the major beta-barrel assembly pathway that is responsible for biogenesis of all outer membrane beta-barrel proteins, and acts in a late step after the SAM complex. The mdm10-mdm12-mmm1 subcomplex further acts in the TOM40-specific pathway after the action of the mdm12-mmm1 complex. Essential for establishing and maintaining the structure of mitochondria and maintenance of mtDNA nucleoids. This chain is Maintenance of mitochondrial morphology protein 1, found in Aspergillus clavatus (strain ATCC 1007 / CBS 513.65 / DSM 816 / NCTC 3887 / NRRL 1 / QM 1276 / 107).